Here is a 321-residue protein sequence, read N- to C-terminus: Ferredoxin--NADP reductase (321 aa).

FAD-binding residues include aspartate 34, glutamine 42, tyrosine 47, valine 87, phenylalanine 119, aspartate 278, and threonine 319.

This sequence belongs to the ferredoxin--NADP reductase type 2 family. As to quaternary structure, homodimer. Requires FAD as cofactor.

The catalysed reaction is 2 reduced [2Fe-2S]-[ferredoxin] + NADP(+) + H(+) = 2 oxidized [2Fe-2S]-[ferredoxin] + NADPH. The polypeptide is Ferredoxin--NADP reductase (Streptococcus pneumoniae serotype 4 (strain ATCC BAA-334 / TIGR4)).